The chain runs to 570 residues: Urease subunit alpha (570 aa).

Positions 131–570 constitute a Urease domain; it reads GGMDSHIHFI…LPMAQRYFLF (440 aa). Positions 136, 138, and 219 each coordinate Ni(2+). Lys-219 is subject to N6-carboxylysine. His-221 provides a ligand contact to substrate. Residues His-248 and His-274 each contribute to the Ni(2+) site. Residue His-322 is the Proton donor of the active site. Residue Asp-362 coordinates Ni(2+).

This sequence belongs to the metallo-dependent hydrolases superfamily. Urease alpha subunit family. Heterotrimer of UreA (gamma), UreB (beta) and UreC (alpha) subunits. Three heterotrimers associate to form the active enzyme. Requires Ni cation as cofactor. Carboxylation allows a single lysine to coordinate two nickel ions.

It localises to the cytoplasm. The enzyme catalyses urea + 2 H2O + H(+) = hydrogencarbonate + 2 NH4(+). Its pathway is nitrogen metabolism; urea degradation; CO(2) and NH(3) from urea (urease route): step 1/1. This is Urease subunit alpha from Sinorhizobium medicae (strain WSM419) (Ensifer medicae).